Reading from the N-terminus, the 385-residue chain is MELGKSIENHNDVVVRLTKHVIATVANGSNLVFSPISINVLLSLIAAGSCSVTKEQILSFLMLPSTDHLNLVLAQIIDGGTEKSDLRLSIANGVWIDKFFSLKLSFKDLLENSYKATCSQVDFASKPSEVIDEVNTWAEVHTNGLIKQILSRDSIDTIRSSTLVLANAVYFKGAWSSKFDANMTKKNDFHLLDGTSVKVPFMTNYEDQYLRSYDGFKVLRLPYIEDQRQFSMYIYLPNDKEGLAPLLEKIGSEPSFFDNHIPLHCISVGAFRIPKFKFSFEFNASEVLKDMGLTSPFNNGGGLTEMVDSPSNGDDLYVSSILHKACIEVDEEGTEAAAVSVGVVSCTSFRRNPDFVADRPFLFTVREDKSGVILFMGQVLDPSKH.

Residues 333–357 (GTEAAAVSVGVVSCTSFRRNPDFVA) are RCL.

Belongs to the serpin family.

Its function is as follows. Probable serine protease inhibitor. This chain is Serpin-Z10, found in Arabidopsis thaliana (Mouse-ear cress).